We begin with the raw amino-acid sequence, 217 residues long: Phosphatidylcholine synthase (217 aa).

A helical membrane pass occupies residues 1 to 8 (ACIGVFSL). Residues 9-16 (VKIYQHEY) are Periplasmic-facing. The helical transmembrane segment at 17–37 (IFALWLMFITVVIDAVDGTLA) threads the bilayer. Residues 38–50 (RLVNIKKILPKID) lie on the Cytoplasmic side of the membrane. The helical transmembrane segment at 51–71 (GALLDNIVDYLNYVITPCFFL) threads the bilayer. The Periplasmic segment spans residues 72 to 77 (LVKPGM). Residues 78 to 98 (LPPEYSVFLIAAVSITSAYQF) traverse the membrane as a helical segment. The Cytoplasmic portion of the chain corresponds to 99–107 (CQCDAKTPD). A helical membrane pass occupies residues 108-128 (HFFKGFPCYWNITILYMFIFN). Position 129 (T129) is a topological domain, periplasmic. A helical membrane pass occupies residues 130–149 (SAATNAIILIILSILIFVPV). Over 150-164 (KYVYPSRLDYLTESR) the chain is Cytoplasmic. The chain crosses the membrane as a helical span at residues 165–185 (ILKILMHICSIIYAVSSICIL). The Periplasmic portion of the chain corresponds to 186 to 191 (ISYPNT). Residues 192–212 (NIICLSLSVAYVGMYLFLSFY) form a helical membrane-spanning segment. Topologically, residues 213 to 217 (RTYYP) are cytoplasmic.

The protein belongs to the CDP-alcohol phosphatidyltransferase class-I family. Mn(2+) is required as a cofactor.

It localises to the cell inner membrane. The enzyme catalyses a CDP-1,2-diacyl-sn-glycerol + choline = a 1,2-diacyl-sn-glycero-3-phosphocholine + CMP + H(+). Condenses choline with CDP-diglyceride to produce phosphatidylcholine and CMP. This Legionella bozemanae (Fluoribacter bozemanae) protein is Phosphatidylcholine synthase.